The primary structure comprises 334 residues: UDP-glucose 4-epimerase (334 aa).

NAD(+)-binding positions include 11–12 (YI), 31–36 (DNLQKG), 50–51 (DI), 72–76 (FAANS), asparagine 91, threonine 116, tyrosine 140, lysine 144, and phenylalanine 168. Substrate is bound by residues threonine 116 and tyrosine 140. The active-site Proton acceptor is tyrosine 140. Residues asparagine 169, 188–189 (HL), 205–207 (AIF), arginine 220, and 281–284 (RSGD) each bind substrate.

Belongs to the NAD(P)-dependent epimerase/dehydratase family. In terms of assembly, homodimer. NAD(+) serves as cofactor.

The catalysed reaction is UDP-alpha-D-glucose = UDP-alpha-D-galactose. Its pathway is carbohydrate metabolism; galactose metabolism. Functionally, involved in the metabolism of galactose. Catalyzes the conversion of UDP-galactose (UDP-Gal) to UDP-glucose (UDP-Glc) through a mechanism involving the transient reduction of NAD. In Halalkalibacterium halodurans (strain ATCC BAA-125 / DSM 18197 / FERM 7344 / JCM 9153 / C-125) (Bacillus halodurans), this protein is UDP-glucose 4-epimerase (galE).